We begin with the raw amino-acid sequence, 321 residues long: ATP-dependent 6-phosphofructokinase (321 aa).

Glycine 10 lines the ATP pocket. 20-24 (RAVVR) lines the ADP pocket. ATP-binding positions include 71 to 72 (RD) and 101 to 104 (GEGT). Mg(2+) is bound at residue glutamate 102. 125-127 (TID) is a substrate binding site. Aspartate 127 acts as the Proton acceptor in catalysis. Arginine 154 contacts ADP. Residues arginine 162 and 169–171 (MGR) contribute to the substrate site. ADP contacts are provided by residues 185–187 (GAE) and 213–215 (KLH). Residues glutamate 222, arginine 246, and 252–255 (HIQR) each bind substrate.

This sequence belongs to the phosphofructokinase type A (PFKA) family. ATP-dependent PFK group I subfamily. Prokaryotic clade 'B1' sub-subfamily. Homotetramer. The cofactor is Mg(2+).

The protein resides in the cytoplasm. The catalysed reaction is beta-D-fructose 6-phosphate + ATP = beta-D-fructose 1,6-bisphosphate + ADP + H(+). Its pathway is carbohydrate degradation; glycolysis; D-glyceraldehyde 3-phosphate and glycerone phosphate from D-glucose: step 3/4. Allosterically activated by ADP and other diphosphonucleosides, and allosterically inhibited by phosphoenolpyruvate. Catalyzes the phosphorylation of D-fructose 6-phosphate to fructose 1,6-bisphosphate by ATP, the first committing step of glycolysis. The polypeptide is ATP-dependent 6-phosphofructokinase (Aquifex aeolicus (strain VF5)).